The following is a 182-amino-acid chain: Crossover junction endodeoxyribonuclease RuvC (182 aa).

Catalysis depends on residues aspartate 7, glutamate 68, and aspartate 141. The Mg(2+) site is built by aspartate 7, glutamate 68, and aspartate 141.

It belongs to the RuvC family. In terms of assembly, homodimer which binds Holliday junction (HJ) DNA. The HJ becomes 2-fold symmetrical on binding to RuvC with unstacked arms; it has a different conformation from HJ DNA in complex with RuvA. In the full resolvosome a probable DNA-RuvA(4)-RuvB(12)-RuvC(2) complex forms which resolves the HJ. Mg(2+) serves as cofactor.

It is found in the cytoplasm. It catalyses the reaction Endonucleolytic cleavage at a junction such as a reciprocal single-stranded crossover between two homologous DNA duplexes (Holliday junction).. In terms of biological role, the RuvA-RuvB-RuvC complex processes Holliday junction (HJ) DNA during genetic recombination and DNA repair. Endonuclease that resolves HJ intermediates. Cleaves cruciform DNA by making single-stranded nicks across the HJ at symmetrical positions within the homologous arms, yielding a 5'-phosphate and a 3'-hydroxyl group; requires a central core of homology in the junction. The consensus cleavage sequence is 5'-(A/T)TT(C/G)-3'. Cleavage occurs on the 3'-side of the TT dinucleotide at the point of strand exchange. HJ branch migration catalyzed by RuvA-RuvB allows RuvC to scan DNA until it finds its consensus sequence, where it cleaves and resolves the cruciform DNA. In Thermobifida fusca (strain YX), this protein is Crossover junction endodeoxyribonuclease RuvC.